The primary structure comprises 159 residues: 2-C-methyl-D-erythritol 2,4-cyclodiphosphate synthase (159 aa).

Aspartate 8 and histidine 10 together coordinate a divalent metal cation. 4-CDP-2-C-methyl-D-erythritol 2-phosphate contacts are provided by residues 8-10 (DVH) and 34-35 (HS). Histidine 42 lines the a divalent metal cation pocket. 4-CDP-2-C-methyl-D-erythritol 2-phosphate contacts are provided by residues 56 to 58 (DIG), 61 to 65 (FPDTD), 100 to 106 (AQAPKML), 132 to 135 (TTTE), phenylalanine 139, and arginine 142.

It belongs to the IspF family. In terms of assembly, homotrimer. Requires a divalent metal cation as cofactor.

It catalyses the reaction 4-CDP-2-C-methyl-D-erythritol 2-phosphate = 2-C-methyl-D-erythritol 2,4-cyclic diphosphate + CMP. It participates in isoprenoid biosynthesis; isopentenyl diphosphate biosynthesis via DXP pathway; isopentenyl diphosphate from 1-deoxy-D-xylulose 5-phosphate: step 4/6. Its function is as follows. Involved in the biosynthesis of isopentenyl diphosphate (IPP) and dimethylallyl diphosphate (DMAPP), two major building blocks of isoprenoid compounds. Catalyzes the conversion of 4-diphosphocytidyl-2-C-methyl-D-erythritol 2-phosphate (CDP-ME2P) to 2-C-methyl-D-erythritol 2,4-cyclodiphosphate (ME-CPP) with a corresponding release of cytidine 5-monophosphate (CMP). The polypeptide is 2-C-methyl-D-erythritol 2,4-cyclodiphosphate synthase (Citrobacter koseri (strain ATCC BAA-895 / CDC 4225-83 / SGSC4696)).